A 577-amino-acid chain; its full sequence is Proline--tRNA ligase (577 aa).

This sequence belongs to the class-II aminoacyl-tRNA synthetase family. ProS type 1 subfamily. Homodimer.

The protein resides in the cytoplasm. The catalysed reaction is tRNA(Pro) + L-proline + ATP = L-prolyl-tRNA(Pro) + AMP + diphosphate. Functionally, catalyzes the attachment of proline to tRNA(Pro) in a two-step reaction: proline is first activated by ATP to form Pro-AMP and then transferred to the acceptor end of tRNA(Pro). As ProRS can inadvertently accommodate and process non-cognate amino acids such as alanine and cysteine, to avoid such errors it has two additional distinct editing activities against alanine. One activity is designated as 'pretransfer' editing and involves the tRNA(Pro)-independent hydrolysis of activated Ala-AMP. The other activity is designated 'posttransfer' editing and involves deacylation of mischarged Ala-tRNA(Pro). The misacylated Cys-tRNA(Pro) is not edited by ProRS. The sequence is that of Proline--tRNA ligase from Helicobacter pylori (strain ATCC 700392 / 26695) (Campylobacter pylori).